The sequence spans 35 residues: MESVAYILILTLAIGVLFFAIAFREPPRIEKKEEK.

The chain crosses the membrane as a helical span at residues 3–23 (SVAYILILTLAIGVLFFAIAF).

This sequence belongs to the PsbT family. As to quaternary structure, PSII is composed of 1 copy each of membrane proteins PsbA, PsbB, PsbC, PsbD, PsbE, PsbF, PsbH, PsbI, PsbJ, PsbK, PsbL, PsbM, PsbT, PsbX, PsbY, PsbZ, Psb30/Ycf12, peripheral proteins PsbO, CyanoQ (PsbQ), PsbU, PsbV and a large number of cofactors. It forms dimeric complexes.

It is found in the cellular thylakoid membrane. Functionally, found at the monomer-monomer interface of the photosystem II (PS II) dimer, plays a role in assembly and dimerization of PSII. PSII is a light-driven water plastoquinone oxidoreductase, using light energy to abstract electrons from H(2)O, generating a proton gradient subsequently used for ATP formation. In Nostoc sp. (strain PCC 7120 / SAG 25.82 / UTEX 2576), this protein is Photosystem II reaction center protein T.